The sequence spans 191 residues: 3-isopropylmalate dehydratase small subunit (191 aa).

It belongs to the LeuD family. LeuD type 1 subfamily. Heterodimer of LeuC and LeuD.

The catalysed reaction is (2R,3S)-3-isopropylmalate = (2S)-2-isopropylmalate. Its pathway is amino-acid biosynthesis; L-leucine biosynthesis; L-leucine from 3-methyl-2-oxobutanoate: step 2/4. In terms of biological role, catalyzes the isomerization between 2-isopropylmalate and 3-isopropylmalate, via the formation of 2-isopropylmaleate. This Lactococcus lactis subsp. cremoris (strain MG1363) protein is 3-isopropylmalate dehydratase small subunit.